Reading from the N-terminus, the 323-residue chain is MIDFGNFYSLIAKNHLSHWLETLPAQIANWQREQQHGLFKQWSNAVEFLPEIKPYRLDLLHSVTAESEEPLSTGQIKRIETLMRNLMPWRKGPFSLYGVNIDTEWRSDWKWDRVLPHLSDLTGRTILDVGCGSGYHMWRMIGAGAHLAVGIDPTQLFLCQFEAVRKLLGNDQRAHLLPLGIEQLPALKAFDTVFSMGVLYHRRSPLEHLWQLKDQLVNEGELVLETLVIDGDENTVLVPGDRYAQMRNVYFIPSALALKNWLKKCGFVDIRVVDVCVTTTEEQRRTEWMVTESLSDFLDPHDPSKTVEGYPAPKRAVLIARKP.

Carboxy-S-adenosyl-L-methionine is bound by residues K91, W105, K110, G130, 152-154 (DPT), 181-182 (IE), M196, Y200, and R315.

The protein belongs to the class I-like SAM-binding methyltransferase superfamily. CmoB family. In terms of assembly, homotetramer.

The enzyme catalyses carboxy-S-adenosyl-L-methionine + 5-hydroxyuridine(34) in tRNA = 5-carboxymethoxyuridine(34) in tRNA + S-adenosyl-L-homocysteine + H(+). In terms of biological role, catalyzes carboxymethyl transfer from carboxy-S-adenosyl-L-methionine (Cx-SAM) to 5-hydroxyuridine (ho5U) to form 5-carboxymethoxyuridine (cmo5U) at position 34 in tRNAs. In Shigella boydii serotype 18 (strain CDC 3083-94 / BS512), this protein is tRNA U34 carboxymethyltransferase.